An 82-amino-acid polypeptide reads, in one-letter code: Small ribosomal subunit protein bS16 (82 aa).

Belongs to the bacterial ribosomal protein bS16 family.

In Elusimicrobium minutum (strain Pei191), this protein is Small ribosomal subunit protein bS16.